Consider the following 534-residue polypeptide: Peptide chain release factor 3 (534 aa).

In terms of domain architecture, tr-type G spans 9-278 (ARRRTFAIIS…FFVEHAPPPQ (270 aa)). Residues 18–25 (SHPDAGKT), 86–90 (DTPGH), and 140–143 (NKLD) each bind GTP.

Belongs to the TRAFAC class translation factor GTPase superfamily. Classic translation factor GTPase family. PrfC subfamily.

Its subcellular location is the cytoplasm. Its function is as follows. Increases the formation of ribosomal termination complexes and stimulates activities of RF-1 and RF-2. It binds guanine nucleotides and has strong preference for UGA stop codons. It may interact directly with the ribosome. The stimulation of RF-1 and RF-2 is significantly reduced by GTP and GDP, but not by GMP. The chain is Peptide chain release factor 3 from Xanthomonas euvesicatoria pv. vesicatoria (strain 85-10) (Xanthomonas campestris pv. vesicatoria).